Consider the following 249-residue polypeptide: 5'-nucleotidase SurE (249 aa).

Aspartate 8, aspartate 9, serine 39, and asparagine 91 together coordinate a divalent metal cation.

This sequence belongs to the SurE nucleotidase family. It depends on a divalent metal cation as a cofactor.

The protein localises to the cytoplasm. The catalysed reaction is a ribonucleoside 5'-phosphate + H2O = a ribonucleoside + phosphate. Functionally, nucleotidase that shows phosphatase activity on nucleoside 5'-monophosphates. The sequence is that of 5'-nucleotidase SurE from Vesicomyosocius okutanii subsp. Calyptogena okutanii (strain HA).